Here is a 374-residue protein sequence, read N- to C-terminus: 5-hydroxytryptamine receptor 1D (374 aa).

Asparagine 5, asparagine 17, and asparagine 21 each carry an N-linked (GlcNAc...) asparagine glycan. The next 3 helical transmembrane spans lie at 36–61, 73–94, and 107–131; these read ISLV…TTIL, LIGS…ISIA, and LCDI…VIAL. A disulfide bond links cysteine 108 and cysteine 185. 2 residues coordinate serotonin: aspartate 115 and cysteine 119. The DRY motif; important for ligand-induced conformation changes signature appears at 132–134; the sequence is DRY. 4 consecutive transmembrane segments (helical) span residues 152–173, 192–215, 298–323, and 333–356; these read AAAM…PLFW, ISYT…ILYG, KTLG…VLPI, and ALFD…YTVF. A serotonin-binding site is contributed by serine 318. An NPxxY motif; important for ligand-induced conformation changes and signaling motif is present at residues 349–353; the sequence is NPVIY.

The protein belongs to the G-protein coupled receptor 1 family. Homodimer. Heterodimer with HTR1B. As to expression, detected in dorsal raphe.

The protein resides in the cell membrane. Functionally, G-protein coupled receptor for 5-hydroxytryptamine (serotonin). Also functions as a receptor for ergot alkaloid derivatives, various anxiolytic and antidepressant drugs and other psychoactive substances. Ligand binding causes a conformation change that triggers signaling via guanine nucleotide-binding proteins (G proteins) and modulates the activity of downstream effectors, such as adenylate cyclase. HTR1D is coupled to G(i)/G(o) G alpha proteins and mediates inhibitory neurotransmission by inhibiting adenylate cyclase activity. Regulates the release of 5-hydroxytryptamine in the brain, and thereby affects neural activity. May also play a role in regulating the release of other neurotransmitters. May play a role in vasoconstriction. This Rattus norvegicus (Rat) protein is 5-hydroxytryptamine receptor 1D (Htr1d).